The following is a 77-amino-acid chain: UPF0401 protein UTI89_C4989 (77 aa).

This sequence belongs to the UPF0401 family.

The chain is UPF0401 protein UTI89_C4989 from Escherichia coli (strain UTI89 / UPEC).